Here is a 144-residue protein sequence, read N- to C-terminus: Cell division protein SepF (144 aa).

Positions 16–42 are disordered; that stretch reads DEMNEAPYTEAEQQEEEVPQAQKNERR.

It belongs to the SepF family. In terms of assembly, homodimer. Interacts with FtsZ.

The protein localises to the cytoplasm. Cell division protein that is part of the divisome complex and is recruited early to the Z-ring. Probably stimulates Z-ring formation, perhaps through the cross-linking of FtsZ protofilaments. Its function overlaps with FtsA. This is Cell division protein SepF from Lactobacillus gasseri (strain ATCC 33323 / DSM 20243 / BCRC 14619 / CIP 102991 / JCM 1131 / KCTC 3163 / NCIMB 11718 / NCTC 13722 / AM63).